A 675-amino-acid chain; its full sequence is G-protein-signaling modulator 1 (675 aa).

A mediates association with membranes region spans residues 1 to 509 (MAGPAPPVAD…DLLTKFQSSR (509 aa)). TPR repeat units follow at residues 28 to 61 (CLELALEGERLCKAGDFKTGVAFFEAAVQVGTED), 66 to 99 (SAIYSQLGNAYFYLKEHGRALEYHKHDLLLARTI), 106 to 139 (AKASGNLGNTLKVLGRFDEAAVCCQRHLSIAQEQ), 146 to 181 (ARALYNIGNVYHAKGKQLSWNAANATQDPGHLPPDV), 183 to 202 (ETLCKASEFYERNLSLVKEL), 209 to 242 (GRAYGNLGNTHYLLGNFTEATTFHKERLAIAKEF), 249 to 282 (RRAYSNLGNAHVFLGRFDVAAEYYKKTLQLSRQL), 289 to 322 (AQACYSLGNTYTLLQDYERAAEYHLRHLLIAQEL), and 329 to 362 (GRACWSLGNAYVSMGRPAQALTFAKKHLQISQEI). Positions 364 to 487 (DRHGELTARM…VRVHVPRTSI (124 aa)) are interaction with STK11/LKB1. A disordered region spans residues 391-412 (SEKPDLAGYEAQGARPKRTQRL). S413 carries the post-translational modification Phosphoserine. An Omega-N-methylarginine modification is found at R421. Positions 424–442 (LEREQNGDSHHSGDWRGPS) are enriched in basic and acidic residues. The segment at 424–492 (LEREQNGDSH…PRTSIPRAPS (69 aa)) is disordered. Phosphoserine is present on residues S445, S469, S471, S492, and S493. The segment covering 454–469 (KYQEGPDAERRPREGS) has biased composition (basic and acidic residues). Positions 495 to 517 (EECFFDLLTKFQSSRMDDQRCPL) constitute a GoLoco 1 domain. 2 positions are modified to phosphoserine: S545 and S569. 3 GoLoco domains span residues 548–570 (TEEFFDLIASSQSRRLDDQRASV), 596–618 (GDDFFNMLIKYQSSRIDDQRCPP), and 630–652 (DEDFFSLIQRVQAKRMDEQRVDL). Disordered regions lie at residues 610–630 (RIDDQRCPPPDVLPRGPTMPD) and 644–675 (RMDEQRVDLAGGPEQGAGGPPEPQQQCQPGAS).

This sequence belongs to the GPSM family. As to quaternary structure, interacts with GNAI1, GNAI2 and GNAI3 preferentially in their GDP-bound state. May also interact with GNAO1. Interacts with STK11/LKB1 and MACF1. Interacts with INSC/inscuteable and FRMPD1. In terms of processing, phosphorylation regulates interaction with G(i/o) alpha. Expressed in intestinal cells.

The protein resides in the cytoplasm. It is found in the cytosol. The protein localises to the endoplasmic reticulum membrane. Its subcellular location is the golgi apparatus membrane. It localises to the cell membrane. In terms of biological role, guanine nucleotide dissociation inhibitor (GDI) which functions as a receptor-independent activator of heterotrimeric G-protein signaling. Keeps G(i/o) alpha subunit in its GDP-bound form thus uncoupling heterotrimeric G-proteins signaling from G protein-coupled receptors. Controls spindle orientation and asymmetric cell fate of cerebral cortical progenitors. May also be involved in macroautophagy in intestinal cells. May play a role in drug addiction. The polypeptide is G-protein-signaling modulator 1 (GPSM1) (Homo sapiens (Human)).